We begin with the raw amino-acid sequence, 362 residues long: Leucoanthocyanidin dioxygenase (362 aa).

The Fe2OG dioxygenase domain maps to 211–313 (MEELLLQKKI…RISWAVFCEP (103 aa)). Fe cation contacts are provided by histidine 238, aspartate 240, and histidine 294.

Belongs to the iron/ascorbate-dependent oxidoreductase family. It depends on Fe cation as a cofactor. The cofactor is L-ascorbate.

The catalysed reaction is a (2R,3S,4S)-leucoanthocyanidin + 2-oxoglutarate + O2 = a 4-H-anthocyanidin with a 3-hydroxy group + succinate + CO2 + 2 H2O. It participates in pigment biosynthesis; anthocyanin biosynthesis. Oxidation of leucoanthocyanidins into anthocyanidins. This chain is Leucoanthocyanidin dioxygenase, found in Vitis vinifera (Grape).